The primary structure comprises 345 residues: Cuticle collagen 14 (345 aa).

3 triple-helical region regions span residues 156–185, 207–263, and 268–333; these read GPPG…PGPP, GDGG…PGTY, and GPAG…PGSC. A disordered region spans residues 161 to 345; the sequence is AGDGGRDGAD…CPPARLAPGY (185 aa). 3 stretches are compositionally biased toward pro residues: residues 179–191, 198–223, and 278–290; these read IGPP…PGPD, PQCP…PPGA, and RPGP…PAGP. Gly residues predominate over residues 292 to 304; it reads GENGKGGGQGPSG.

Belongs to the cuticular collagen family. In terms of assembly, collagen polypeptide chains are complexed within the cuticle by disulfide bonds and other types of covalent cross-links.

Nematode cuticles are composed largely of collagen-like proteins. The cuticle functions both as an exoskeleton and as a barrier to protect the worm from its environment. The polypeptide is Cuticle collagen 14 (col-14) (Caenorhabditis elegans).